The chain runs to 204 residues: N-(5'-phosphoribosyl)anthranilate isomerase (204 aa).

This sequence belongs to the TrpF family.

The enzyme catalyses N-(5-phospho-beta-D-ribosyl)anthranilate = 1-(2-carboxyphenylamino)-1-deoxy-D-ribulose 5-phosphate. It functions in the pathway amino-acid biosynthesis; L-tryptophan biosynthesis; L-tryptophan from chorismate: step 3/5. This chain is N-(5'-phosphoribosyl)anthranilate isomerase, found in Geobacter sp. (strain M21).